A 142-amino-acid chain; its full sequence is HTH-type transcriptional regulator MntR (142 aa).

The 63-residue stretch at 1–63 (MPTPSMEDYI…YEKYRGLILT (63 aa)) folds into the HTH dtxR-type domain. Positions 8, 11, 77, 99, 102, and 103 each coordinate Mn(2+).

It belongs to the DtxR/MntR family. Homodimer.

It localises to the cytoplasm. With respect to regulation, DNA binding is strongly activated by Mn(2+). In terms of biological role, central regulator of manganese homeostasis. In Listeria monocytogenes serotype 4b (strain CLIP80459), this protein is HTH-type transcriptional regulator MntR.